The sequence spans 794 residues: DNA ligase (794 aa).

NAD(+) is bound by residues 35–39, 84–85, and Glu-126; these read DAEYD and SL. Lys-128 (N6-AMP-lysine intermediate) is an active-site residue. NAD(+) is bound by residues Arg-149, Glu-186, Lys-302, and Lys-326. Zn(2+)-binding residues include Cys-420, Cys-423, Cys-450, and Cys-456. One can recognise a BRCT domain in the interval 711–794; sequence VEGLPLAGQT…KLFDEHGVAR (84 aa).

The protein belongs to the NAD-dependent DNA ligase family. LigA subfamily. Mg(2+) is required as a cofactor. Requires Mn(2+) as cofactor.

The enzyme catalyses NAD(+) + (deoxyribonucleotide)n-3'-hydroxyl + 5'-phospho-(deoxyribonucleotide)m = (deoxyribonucleotide)n+m + AMP + beta-nicotinamide D-nucleotide.. In terms of biological role, DNA ligase that catalyzes the formation of phosphodiester linkages between 5'-phosphoryl and 3'-hydroxyl groups in double-stranded DNA using NAD as a coenzyme and as the energy source for the reaction. It is essential for DNA replication and repair of damaged DNA. The chain is DNA ligase from Pseudomonas aeruginosa (strain UCBPP-PA14).